The following is a 252-amino-acid chain: Triosephosphate isomerase (252 aa).

Residue 9–11 (NWK) coordinates substrate. The active-site Electrophile is His-100. Glu-171 serves as the catalytic Proton acceptor. Substrate is bound by residues Gly-177, Ser-216, and 237-238 (GG).

Belongs to the triosephosphate isomerase family. In terms of assembly, homodimer.

The protein resides in the cytoplasm. The enzyme catalyses D-glyceraldehyde 3-phosphate = dihydroxyacetone phosphate. Its pathway is carbohydrate biosynthesis; gluconeogenesis. The protein operates within carbohydrate degradation; glycolysis; D-glyceraldehyde 3-phosphate from glycerone phosphate: step 1/1. Involved in the gluconeogenesis. Catalyzes stereospecifically the conversion of dihydroxyacetone phosphate (DHAP) to D-glyceraldehyde-3-phosphate (G3P). This Polynucleobacter asymbioticus (strain DSM 18221 / CIP 109841 / QLW-P1DMWA-1) (Polynucleobacter necessarius subsp. asymbioticus) protein is Triosephosphate isomerase.